Consider the following 469-residue polypeptide: Glutamine synthetase (469 aa).

The GS beta-grasp domain occupies 15-96 (NDVKFIDVRF…INFFIHDPIT (82 aa)). The 366-residue stretch at 104–469 (PRNIAKKAEA…PHEFELYFDI (366 aa)) folds into the GS catalytic domain. Mg(2+) is bound by residues E129 and E131. E205 contributes to the ATP binding site. Mg(2+)-binding residues include E210 and E218. Residue 221–223 (YKF) coordinates ATP. Residues 262-263 (NG) and G263 each bind L-glutamate. Residue H267 participates in Mg(2+) binding. ATP is bound by residues 269 to 271 (HQS) and S271. R320, E326, and R338 together coordinate L-glutamate. Residues R338, R343, and K352 each contribute to the ATP site. Residue E357 participates in Mg(2+) binding. An L-glutamate-binding site is contributed by R359. Y397 is subject to O-AMP-tyrosine.

It belongs to the glutamine synthetase family. As to quaternary structure, oligomer of 12 subunits arranged in the form of two hexagons. The cofactor is Mg(2+).

It is found in the cytoplasm. It catalyses the reaction L-glutamate + NH4(+) + ATP = L-glutamine + ADP + phosphate + H(+). The activity of this enzyme could be controlled by adenylation under conditions of abundant glutamine. Functionally, catalyzes the ATP-dependent biosynthesis of glutamine from glutamate and ammonia. This is Glutamine synthetase from Streptomyces filamentosus (Streptomyces roseosporus).